Consider the following 648-residue polypeptide: Threonine--tRNA ligase (648 aa).

The 63-residue stretch at 1-63 (MSQISLTFPD…AASGRIAINT (63 aa)) folds into the TGS domain. Residues 247-544 (DHRKLGREME…LIENYSGKLP (298 aa)) form a catalytic region. Cys344, His395, and His521 together coordinate Zn(2+).

Belongs to the class-II aminoacyl-tRNA synthetase family. Homodimer. Requires Zn(2+) as cofactor.

The protein resides in the cytoplasm. The catalysed reaction is tRNA(Thr) + L-threonine + ATP = L-threonyl-tRNA(Thr) + AMP + diphosphate + H(+). In terms of biological role, catalyzes the attachment of threonine to tRNA(Thr) in a two-step reaction: L-threonine is first activated by ATP to form Thr-AMP and then transferred to the acceptor end of tRNA(Thr). Also edits incorrectly charged L-seryl-tRNA(Thr). In Paracoccus denitrificans (strain Pd 1222), this protein is Threonine--tRNA ligase.